The primary structure comprises 355 residues: C-C chemokine receptor type 3 (355 aa).

Over 1–34 (MTTSLDTVETFGPTSYDDDMGLLCEKADVGALIA) the chain is Extracellular. The chain crosses the membrane as a helical span at residues 35–62 (QFVPPLYSLVFMVGLLGNVVVVMILIKY). At 63–72 (RRLRIMTNIY) the chain is on the cytoplasmic side. Residues 73-93 (LLNLAISDLLFLFTLPFWIHY) form a helical membrane-spanning segment. Residues 94–107 (VRERNWVFSHGMCK) are Extracellular-facing. An intrachain disulfide couples Cys106 to Cys183. A helical membrane pass occupies residues 108–129 (VLSGFYHTGLYSEIFFIILLTI). Residues 130–146 (DRYLAIVHAVFALRART) lie on the Cytoplasmic side of the membrane. A helical transmembrane segment spans residues 147–171 (VTFGVVTSIVTWGLAVLAALPEFIF). At 172 to 203 (YGTEELFPETLCSAIYPQDTVYSWRHFHTLRM) the chain is on the extracellular side. A helical membrane pass occupies residues 204–223 (TILCLALPLLVMAICYTGII). Topologically, residues 224–239 (KTLLRCPSKKKYKAIR) are cytoplasmic. Residues 240 to 264 (LIFVIMAVFFIFWTPYNVAILISTY) form a helical membrane-spanning segment. Topologically, residues 265–281 (QSILFGPDCERSKHLDL) are extracellular. The helical transmembrane segment at 282 to 305 (FVLVTEVIAYSHCWVNPVIYAFVG) threads the bilayer. The Cytoplasmic portion of the chain corresponds to 306 to 355 (ERFRKYLRHFFHRHVLMHPGKYIPFLPSEKLERTSSVSPSTAEPELSIVF).

Belongs to the G-protein coupled receptor 1 family.

The protein localises to the cell membrane. Its function is as follows. Receptor for C-C type chemokine. Binds and responds to a variety of chemokines, including CCL11, CCL26, CCL7, CCL13, RANTES(CCL5) and CCL15. Subsequently transduces a signal by increasing the intracellular calcium ions level. In addition acts as a possible functional receptor for NARS1. The protein is C-C chemokine receptor type 3 (CCR3) of Macaca fascicularis (Crab-eating macaque).